The following is a 353-amino-acid chain: UDP-N-acetylenolpyruvoylglucosamine reductase (353 aa).

Positions 31-201 (LASHAPAFVA…GSVRFALPRP (171 aa)) constitute an FAD-binding PCMH-type domain. Residue arginine 177 is part of the active site. The active-site Proton donor is the serine 250. Glutamate 346 is an active-site residue.

It belongs to the MurB family. FAD serves as cofactor.

It localises to the cytoplasm. It catalyses the reaction UDP-N-acetyl-alpha-D-muramate + NADP(+) = UDP-N-acetyl-3-O-(1-carboxyvinyl)-alpha-D-glucosamine + NADPH + H(+). Its pathway is cell wall biogenesis; peptidoglycan biosynthesis. Its function is as follows. Cell wall formation. The polypeptide is UDP-N-acetylenolpyruvoylglucosamine reductase (Bordetella parapertussis (strain 12822 / ATCC BAA-587 / NCTC 13253)).